The following is a 634-amino-acid chain: Acetylcholinesterase (634 aa).

The signal sequence occupies residues 1–23; sequence MKTSDILLLPTVLLTFLFHNCFA. Cysteine 91 and cysteine 118 are oxidised to a cystine. N-linked (GlcNAc...) asparagine glycosylation is found at asparagine 133 and asparagine 184. The active-site Acyl-ester intermediate is the serine 225. Cysteine 279 and cysteine 290 are disulfide-bonded. Residue asparagine 283 is glycosylated (N-linked (GlcNAc...) asparagine). The Charge relay system role is filled by glutamate 352. Asparagine 368 is a glycosylation site (N-linked (GlcNAc...) asparagine). A disulfide bridge connects residues cysteine 427 and cysteine 580. Histidine 495 serves as the catalytic Charge relay system. Residues asparagine 512 and asparagine 592 are each glycosylated (N-linked (GlcNAc...) asparagine).

The protein belongs to the type-B carboxylesterase/lipase family. As to quaternary structure, dimers and collagen-tailed forms, in which catalytic tetramers are associated with anchoring proteins that attach them to the basal lamina or to cell membranes. In the collagen-tailed forms, subunits are associated with a specific collagen, COLQ, which triggers the formation of isoform T tetramers from dimers.

It localises to the synapse. The protein resides in the secreted. The protein localises to the cell membrane. It catalyses the reaction acetylcholine + H2O = choline + acetate + H(+). Its function is as follows. Terminates signal transduction at the neuromuscular junction by rapid hydrolysis of the acetylcholine released into the synaptic cleft. This is Acetylcholinesterase (ache) from Danio rerio (Zebrafish).